The following is a 555-amino-acid chain: Formate--tetrahydrofolate ligase (555 aa).

The protein belongs to the formate--tetrahydrofolate ligase family.

It catalyses the reaction (6S)-5,6,7,8-tetrahydrofolate + formate + ATP = (6R)-10-formyltetrahydrofolate + ADP + phosphate. Its pathway is one-carbon metabolism; tetrahydrofolate interconversion. This Porphyromonas gingivalis (strain ATCC BAA-308 / W83) protein is Formate--tetrahydrofolate ligase.